A 271-amino-acid chain; its full sequence is Rhomboid-type serine protease 2 (271 aa).

The next 6 membrane-spanning stretches (helical) occupy residues 16 to 36, 64 to 84, 89 to 111, 115 to 137, 152 to 172, and 176 to 196; these read GLAV…NLVY, HLSF…IVMF, GTLY…YCLI, LFPN…YFAV, FSFP…LLAP, and LPGH…ENWV. Ser125 functions as the Nucleophile in the catalytic mechanism. His179 is a catalytic residue. A disordered region spans residues 252 to 271; the sequence is HNTDTPAEPTFQGNGRVLGN.

This sequence belongs to the peptidase S54 family.

It localises to the golgi apparatus membrane. The protein localises to the golgi apparatus. It is found in the cis-Golgi network membrane. It carries out the reaction Cleaves type-1 transmembrane domains using a catalytic dyad composed of serine and histidine that are contributed by different transmembrane domains.. Probable rhomboid-type serine protease that catalyzes intramembrane proteolysis. This chain is Rhomboid-type serine protease 2 (RBD2), found in Kluyveromyces lactis (strain ATCC 8585 / CBS 2359 / DSM 70799 / NBRC 1267 / NRRL Y-1140 / WM37) (Yeast).